Reading from the N-terminus, the 405-residue chain is NADH-quinone oxidoreductase subunit D (405 aa).

The protein belongs to the complex I 49 kDa subunit family. NDH-1 is composed of 14 different subunits. Subunits NuoB, C, D, E, F, and G constitute the peripheral sector of the complex.

The protein localises to the cell inner membrane. The enzyme catalyses a quinone + NADH + 5 H(+)(in) = a quinol + NAD(+) + 4 H(+)(out). Its function is as follows. NDH-1 shuttles electrons from NADH, via FMN and iron-sulfur (Fe-S) centers, to quinones in the respiratory chain. The immediate electron acceptor for the enzyme in this species is believed to be ubiquinone. Couples the redox reaction to proton translocation (for every two electrons transferred, four hydrogen ions are translocated across the cytoplasmic membrane), and thus conserves the redox energy in a proton gradient. The sequence is that of NADH-quinone oxidoreductase subunit D from Sphingopyxis alaskensis (strain DSM 13593 / LMG 18877 / RB2256) (Sphingomonas alaskensis).